The following is a 165-amino-acid chain: Cysteine and tyrosine-rich protein 1 (165 aa).

An N-terminal signal peptide occupies residues 1 to 29; it reads MDALRLPRRLGVLLWKVVLLFVYAEDCRA. The Extracellular segment spans residues 30–61; that stretch reads QCGKDCRAYCCNGSTPHCCSYYAYIGSILSGT. The helical transmembrane segment at 62–82 threads the bilayer; sequence AIAGIVFGIVFIMGVIAGIAI. The Cytoplasmic segment spans residues 83–165; it reads CICMCMKNNR…SSSQNRICNN (83 aa). The tract at residues 127–165 is disordered; the sequence is DLPPPYSPAPQASAQRSPPPPYPGNSRKYSSSQNRICNN. Residues 153–165 show a composition bias toward polar residues; the sequence is RKYSSSQNRICNN.

It belongs to the CYYR1 family.

Its subcellular location is the membrane. This Rattus norvegicus (Rat) protein is Cysteine and tyrosine-rich protein 1 (Cyyr1).